The following is a 734-amino-acid chain: Meiotic driver SPOK1 (734 aa).

A coiled-coil region spans residues 4-41; it reads KDRIAQLLRELEEAKARVEEAKAREAQERCEKERLQLE. Disordered regions lie at residues 180–222 and 414–499; these read ELTQ…ICSN and LSSA…MADP. Residues 416-429 show a composition bias toward polar residues; it reads SAPSSQNTDISEYT. The segment covering 457 to 468 has biased composition (basic and acidic residues); the sequence is NEHDEHDEDHSE.

It is found in the cytoplasm. The protein resides in the nucleus. Functionally, promotes unequal transmission of alleles from the parental zygote to progeny spores by acting as poison/antidote system, leading to poisoning of progeny that do not inherit the allele. May possess DNA nuclease activity that leads to spore killing, and a kinase activity that confers resistance to the nuclease activity. Can suppress meiotic drive by the P.anserina SPOK2, SPOK3 and SPOK4 proteins. The sequence is that of Meiotic driver SPOK1 from Podospora comata.